Reading from the N-terminus, the 433-residue chain is Small ribosomal subunit biogenesis GTPase RsgA 1, mitochondrial (433 aa).

Residues 1-20 (MLRAKHIGKNYSSSLSPVLS) form a disordered region. Positions 113-291 (SEILDPPVAN…LADTPGFNQP (179 aa)) constitute a CP-type G domain. 212–220 (GPSGVGKSS) serves as a coordination point for GTP. Residues Cys-317, Cys-322, His-324, and Cys-330 each coordinate Zn(2+).

The protein belongs to the TRAFAC class YlqF/YawG GTPase family. RsgA subfamily. In terms of assembly, monomer. Associates with 30S ribosomal subunit, binds 16S rRNA. Zn(2+) is required as a cofactor.

Its subcellular location is the mitochondrion. One of several proteins that assist in the late maturation steps of the functional core of the 30S ribosomal subunit. Helps release RbfA from mature subunits. May play a role in the assembly of ribosomal proteins into the subunit. Circularly permuted GTPase that catalyzes slow GTP hydrolysis, GTPase activity is stimulated by the 30S ribosomal subunit. Required for embryo development. The protein is Small ribosomal subunit biogenesis GTPase RsgA 1, mitochondrial of Arabidopsis thaliana (Mouse-ear cress).